We begin with the raw amino-acid sequence, 326 residues long: Vitamin B12 import system permease protein BtuC (326 aa).

Transmembrane regions (helical) follow at residues 15–35 (WLLC…CAGE), 61–81 (LAVL…QALF), 88–108 (PGLL…VLLG), 112–132 (LPNW…TLIL), 146–166 (LLAG…AIYF), 184–204 (GGVD…LLWI), 240–260 (GWMV…GLVI), 274–294 (VLLP…DVVA), and 302–322 (ELPI…WLLL).

It belongs to the binding-protein-dependent transport system permease family. FecCD subfamily. The complex is composed of two ATP-binding proteins (BtuD), two transmembrane proteins (BtuC) and a solute-binding protein (BtuF).

Its subcellular location is the cell inner membrane. Part of the ABC transporter complex BtuCDF involved in vitamin B12 import. Involved in the translocation of the substrate across the membrane. The polypeptide is Vitamin B12 import system permease protein BtuC (Escherichia coli (strain SE11)).